The chain runs to 630 residues: Polygalacturonase-1 non-catalytic subunit beta (630 aa).

The first 27 residues, 1-27, serve as a signal peptide directing secretion; the sequence is MHTKIHLPPCILLLLLFSLPSFNVVVG. Positions 28 to 108 are excised as a propeptide; the sequence is GDGESGNPFT…MCAPDLSPSL (81 aa). Asn124, Asn142, Asn256, Asn334, Asn369, and Asn387 each carry an N-linked (GlcNAc...) asparagine glycan. The propeptide occupies 398–630; it reads EVNGGKKVNN…ENDMTWAIAD (233 aa). One can recognise a BURP domain in the interval 415-629; that stretch reads FFREKMLKSG…FENDMTWAIA (215 aa).

In terms of assembly, interacts with polygalacturonase-2 (isoenzymes PG2A and PG2B) to form heterodimers called polygalacturonase-1 (PG1). As to expression, mostly expressed in fruit pericarp. Also detected at low levels in cell wall of roots, leaves and flowers (at protein level).

The protein resides in the secreted. It is found in the extracellular space. It localises to the apoplast. The protein localises to the cell wall. Functionally, non-catalytic subunit of the polygalacturonase isozyme 1 (PG1). Necessary and sufficient to convert the polygalacturonase from its monomeric form PG2 to its heterodimeric form PG1. Seems to limit the depolymerization and solubilization of cell wall polyuronides mediated by PG2 during ripening, probably by recruiting PG2 to form PG1. This is Polygalacturonase-1 non-catalytic subunit beta (GP1) from Solanum lycopersicum (Tomato).